Here is a 106-residue protein sequence, read N- to C-terminus: UPF0145 protein PputW619_2377 (106 aa).

It belongs to the UPF0145 family.

This is UPF0145 protein PputW619_2377 from Pseudomonas putida (strain W619).